A 336-amino-acid chain; its full sequence is Aspartate--ammonia ligase (336 aa).

Belongs to the class-II aminoacyl-tRNA synthetase family. AsnA subfamily.

The protein localises to the cytoplasm. The enzyme catalyses L-aspartate + NH4(+) + ATP = L-asparagine + AMP + diphosphate + H(+). It participates in amino-acid biosynthesis; L-asparagine biosynthesis; L-asparagine from L-aspartate (ammonia route): step 1/1. The polypeptide is Aspartate--ammonia ligase (Clostridium perfringens (strain SM101 / Type A)).